We begin with the raw amino-acid sequence, 216 residues long: Guanylate kinase (216 aa).

Residues 11 to 189 form the Guanylate kinase-like domain; it reads GVLIVISGPS…AVKKIEAILL (179 aa). ATP is bound at residue 18 to 25; that stretch reads GPSGAGKG.

It belongs to the guanylate kinase family.

The protein resides in the cytoplasm. The catalysed reaction is GMP + ATP = GDP + ADP. Functionally, essential for recycling GMP and indirectly, cGMP. This Clostridium perfringens (strain SM101 / Type A) protein is Guanylate kinase.